The chain runs to 962 residues: Glycine dehydrogenase (decarboxylating) (962 aa).

Lys-709 is modified (N6-(pyridoxal phosphate)lysine).

The protein belongs to the GcvP family. As to quaternary structure, the glycine cleavage system is composed of four proteins: P, T, L and H. Pyridoxal 5'-phosphate is required as a cofactor.

The catalysed reaction is N(6)-[(R)-lipoyl]-L-lysyl-[glycine-cleavage complex H protein] + glycine + H(+) = N(6)-[(R)-S(8)-aminomethyldihydrolipoyl]-L-lysyl-[glycine-cleavage complex H protein] + CO2. Functionally, the glycine cleavage system catalyzes the degradation of glycine. The P protein binds the alpha-amino group of glycine through its pyridoxal phosphate cofactor; CO(2) is released and the remaining methylamine moiety is then transferred to the lipoamide cofactor of the H protein. The chain is Glycine dehydrogenase (decarboxylating) from Shewanella putrefaciens (strain CN-32 / ATCC BAA-453).